The following is a 343-amino-acid chain: uncharacterized protein (343 aa).

33 to 40 (GPKSSGKS) lines the ATP pocket.

Belongs to the archaeal ATPase family.

This is an uncharacterized protein from Methanocaldococcus jannaschii (strain ATCC 43067 / DSM 2661 / JAL-1 / JCM 10045 / NBRC 100440) (Methanococcus jannaschii).